The primary structure comprises 146 residues: Hemoglobin subunit beta (146 aa).

V1 carries the N-acetylvaline modification. The Globin domain maps to 2 to 146; sequence HLTPEEKNAV…VANALAHKYH (145 aa). T12 is modified (phosphothreonine). Position 44 is a phosphoserine (S44). K59 bears the N6-acetyllysine mark. H63 serves as a coordination point for heme b. N6-acetyllysine is present on K82. H92 is a heme b binding site. At C93 the chain carries S-nitrosocysteine. The residue at position 144 (K144) is an N6-acetyllysine.

Belongs to the globin family. In terms of assembly, heterotetramer of two alpha chains and two beta chains. Red blood cells.

Its function is as follows. Involved in oxygen transport from the lung to the various peripheral tissues. This chain is Hemoglobin subunit beta (HBB), found in Papio cynocephalus (Yellow baboon).